A 100-amino-acid chain; its full sequence is NADH-quinone oxidoreductase subunit K (100 aa).

Helical transmembrane passes span 4-24 (LTHG…GLVI), 28-48 (LLFM…AFVV), and 60-80 (VMYI…LALL).

It belongs to the complex I subunit 4L family. As to quaternary structure, NDH-1 is composed of 13 different subunits. Subunits NuoA, H, J, K, L, M, N constitute the membrane sector of the complex.

It localises to the cell inner membrane. The catalysed reaction is a quinone + NADH + 5 H(+)(in) = a quinol + NAD(+) + 4 H(+)(out). In terms of biological role, NDH-1 shuttles electrons from NADH, via FMN and iron-sulfur (Fe-S) centers, to quinones in the respiratory chain. The immediate electron acceptor for the enzyme in this species is believed to be ubiquinone. Couples the redox reaction to proton translocation (for every two electrons transferred, four hydrogen ions are translocated across the cytoplasmic membrane), and thus conserves the redox energy in a proton gradient. The polypeptide is NADH-quinone oxidoreductase subunit K (Enterobacter sp. (strain 638)).